A 126-amino-acid chain; its full sequence is Aspartate 1-decarboxylase (126 aa).

The Schiff-base intermediate with substrate; via pyruvic acid role is filled by S25. Residue S25 is modified to Pyruvic acid (Ser). Residue T57 participates in substrate binding. Y58 functions as the Proton donor in the catalytic mechanism. Residue 73–75 (GSA) participates in substrate binding.

This sequence belongs to the PanD family. In terms of assembly, heterooctamer of four alpha and four beta subunits. Requires pyruvate as cofactor. Post-translationally, is synthesized initially as an inactive proenzyme, which is activated by self-cleavage at a specific serine bond to produce a beta-subunit with a hydroxyl group at its C-terminus and an alpha-subunit with a pyruvoyl group at its N-terminus.

It is found in the cytoplasm. It carries out the reaction L-aspartate + H(+) = beta-alanine + CO2. It functions in the pathway cofactor biosynthesis; (R)-pantothenate biosynthesis; beta-alanine from L-aspartate: step 1/1. Functionally, catalyzes the pyruvoyl-dependent decarboxylation of aspartate to produce beta-alanine. This is Aspartate 1-decarboxylase from Chromobacterium violaceum (strain ATCC 12472 / DSM 30191 / JCM 1249 / CCUG 213 / NBRC 12614 / NCIMB 9131 / NCTC 9757 / MK).